A 241-amino-acid chain; its full sequence is Carboxy-S-adenosyl-L-methionine synthase (241 aa).

S-adenosyl-L-methionine-binding positions include Y38, 63 to 65, 88 to 89, 116 to 117, N131, and R198; these read GCS, DN, and DI.

The protein belongs to the class I-like SAM-binding methyltransferase superfamily. Cx-SAM synthase family. In terms of assembly, homodimer.

It carries out the reaction prephenate + S-adenosyl-L-methionine = carboxy-S-adenosyl-L-methionine + 3-phenylpyruvate + H2O. In terms of biological role, catalyzes the conversion of S-adenosyl-L-methionine (SAM) to carboxy-S-adenosyl-L-methionine (Cx-SAM). The chain is Carboxy-S-adenosyl-L-methionine synthase from Pasteurella multocida (strain Pm70).